A 569-amino-acid polypeptide reads, in one-letter code: Laccase-13 (569 aa).

The N-terminal stretch at Met-1–Ala-21 is a signal peptide. 2 Plastocyanin-like domains span residues Val-29–Ser-145 and Arg-157–Ala-308. The N-linked (GlcNAc...) asparagine glycan is linked to Asn-75. Residues His-79, His-81, His-124, and His-126 each contribute to the Cu cation site. Residues Asn-186, Asn-296, Asn-330, Asn-381, Asn-391, and Asn-432 are each glycosylated (N-linked (GlcNAc...) asparagine). Residues Asp-418–Glu-553 form the Plastocyanin-like 3 domain. 7 residues coordinate Cu cation: His-470, His-473, His-475, His-532, Cys-533, His-534, and His-538.

It belongs to the multicopper oxidase family. Cu cation is required as a cofactor. Mostly expressed in roots. Also detected in leaves, stems and flowers but not in siliques.

It localises to the secreted. It is found in the extracellular space. The protein resides in the apoplast. The enzyme catalyses 4 hydroquinone + O2 = 4 benzosemiquinone + 2 H2O. In terms of biological role, lignin degradation and detoxification of lignin-derived products. The sequence is that of Laccase-13 (LAC13) from Arabidopsis thaliana (Mouse-ear cress).